Here is a 301-residue protein sequence, read N- to C-terminus: Protein translocase subunit SecF (301 aa).

6 helical membrane passes run Y17–I37, D137–F157, I163–L183, I190–F210, L239–G261, and I272–L292.

Belongs to the SecD/SecF family. SecF subfamily. As to quaternary structure, forms a complex with SecD. Part of the essential Sec protein translocation apparatus which comprises SecA, SecYEG and auxiliary proteins SecDF. Other proteins may also be involved.

The protein resides in the cell inner membrane. Part of the Sec protein translocase complex. Interacts with the SecYEG preprotein conducting channel. SecDF uses the proton motive force (PMF) to complete protein translocation after the ATP-dependent function of SecA. The protein is Protein translocase subunit SecF of Thermodesulfovibrio yellowstonii (strain ATCC 51303 / DSM 11347 / YP87).